A 297-amino-acid polypeptide reads, in one-letter code: Mitochondrial nicotinamide adenine dinucleotide transporter SLC25A51 (297 aa).

Over residues 1 to 11 (MMDSEAHEKRP) the composition is skewed to basic and acidic residues. The tract at residues 1–20 (MMDSEAHEKRPPILTSSKQD) is disordered. Solcar repeat units follow at residues 28 to 108 (VGEM…LSCL), 116 to 200 (PEFA…IKEH), and 213 to 296 (NDFI…LLKV). 6 consecutive transmembrane segments (helical) span residues 36–56 (CGCCAAFNNVAITFPIQKVLF), 85–105 (LPPLMQKTTTLALMFGLYEDL), 116–135 (PEFATSGVAAVLAGTTEAIF), 179–199 (ILFRNGLSNVLFFGLRGPIKE), 215–235 (FICGGLLGAMLGFLFFPINVV), and 268–289 (LFRGAHLNYHRSLISWGIINAT).

It belongs to the mitochondrial carrier (TC 2.A.29) family.

It localises to the mitochondrion inner membrane. The catalysed reaction is NAD(+)(in) = NAD(+)(out). In terms of biological role, mitochondrial membrane carrier protein that mediates the import of NAD(+) into mitochondria. Mitochondrial NAD(+) is required for glycolysis and mitochondrial respiration. Compared to SLC25A52, SLC25A51-mediated transport is essential for the import of NAD(+) in mitochondria. The transport mechanism, uniport or antiport, its electrogenicity and substrate selectivity, remain to be elucidated. This Homo sapiens (Human) protein is Mitochondrial nicotinamide adenine dinucleotide transporter SLC25A51.